The chain runs to 157 residues: 2-C-methyl-D-erythritol 2,4-cyclodiphosphate synthase (157 aa).

Residues Asp-8 and His-10 each contribute to the a divalent metal cation site. 4-CDP-2-C-methyl-D-erythritol 2-phosphate contacts are provided by residues 8-10 (DIH) and 34-35 (HS). His-42 is a binding site for a divalent metal cation. Residues 56–58 (DIG) and 132–135 (TTNE) contribute to the 4-CDP-2-C-methyl-D-erythritol 2-phosphate site.

It belongs to the IspF family. In terms of assembly, homotrimer. A divalent metal cation serves as cofactor.

It carries out the reaction 4-CDP-2-C-methyl-D-erythritol 2-phosphate = 2-C-methyl-D-erythritol 2,4-cyclic diphosphate + CMP. Its pathway is isoprenoid biosynthesis; isopentenyl diphosphate biosynthesis via DXP pathway; isopentenyl diphosphate from 1-deoxy-D-xylulose 5-phosphate: step 4/6. Its function is as follows. Involved in the biosynthesis of isopentenyl diphosphate (IPP) and dimethylallyl diphosphate (DMAPP), two major building blocks of isoprenoid compounds. Catalyzes the conversion of 4-diphosphocytidyl-2-C-methyl-D-erythritol 2-phosphate (CDP-ME2P) to 2-C-methyl-D-erythritol 2,4-cyclodiphosphate (ME-CPP) with a corresponding release of cytidine 5-monophosphate (CMP). The polypeptide is 2-C-methyl-D-erythritol 2,4-cyclodiphosphate synthase (Synechococcus sp. (strain JA-3-3Ab) (Cyanobacteria bacterium Yellowstone A-Prime)).